Here is a 388-residue protein sequence, read N- to C-terminus: MMLSLPAKFEVFGAVRIYDVSRVLSLDGRPKSRPTNLVYVDRGELEDAAFRTVIVVPVKDEDLLTLENVLRSIPTESPVVVVSASTREPVDRFSNEVELARLISRSLQRDIAIVYQFDPAWSEALSGTPLESMVGASGRVRKGKGEGMLLGFIVAAALGADFVGYVDSDNYVPGSALEYSWIYYSALSRATSSYSMVRIVWPYKGKLAASDMYLRKRGRVSTITNGVLNYTLSIYKRIETDIIKTGNSGEQALTVKLGMEMNWGSGFAVETYQLVWMLENCYLGLQAGKCPIAPDYIEVRQVSPLNPHIHAERGDEHIAEMTAVSLGTIFHSSLASEEVKSRILDQLKSLGLAEEPPKPSTYRPAGTDPKKVFASFIAESSDSYYFAV.

Belongs to the glycosyltransferase 2 family.

The protein resides in the cytoplasm. It catalyses the reaction (2R)-3-phosphoglycerate + GDP-alpha-D-mannose = 2-O-(alpha-D-mannosyl)-3-phosphoglycerate + GDP + H(+). The protein operates within carbohydrate biosynthesis; 2-(alpha-D-mannosyl)-D-glycerate biosynthesis; 2-(alpha-D-mannosyl)-D-glycerate from GDP-alpha-D-mannose (MPG route): step 1/2. Its function is as follows. Transfers a mannosyl group from GDP-mannose to phosphoglycerate to form mannosyl-3-phosphoglycerate (MPG). The protein is Mannosyl-3-phosphoglycerate synthase (mngA) of Aeropyrum pernix (strain ATCC 700893 / DSM 11879 / JCM 9820 / NBRC 100138 / K1).